Consider the following 563-residue polypeptide: Arginine--tRNA ligase (563 aa).

The 'HIGH' region motif lies at 121–131 (PNIAKPFSIGH).

It belongs to the class-I aminoacyl-tRNA synthetase family. As to quaternary structure, monomer.

The protein localises to the cytoplasm. It carries out the reaction tRNA(Arg) + L-arginine + ATP = L-arginyl-tRNA(Arg) + AMP + diphosphate. In Streptococcus pneumoniae (strain CGSP14), this protein is Arginine--tRNA ligase.